A 366-amino-acid polypeptide reads, in one-letter code: Alanine racemase (366 aa).

The active-site Proton acceptor; specific for D-alanine is the lysine 40. Lysine 40 carries the post-translational modification N6-(pyridoxal phosphate)lysine. Arginine 136 is a substrate binding site. Residue tyrosine 263 is the Proton acceptor; specific for L-alanine of the active site. Methionine 310 contacts substrate.

It belongs to the alanine racemase family. Requires pyridoxal 5'-phosphate as cofactor.

It carries out the reaction L-alanine = D-alanine. It functions in the pathway amino-acid biosynthesis; D-alanine biosynthesis; D-alanine from L-alanine: step 1/1. In terms of biological role, catalyzes the interconversion of L-alanine and D-alanine. May also act on other amino acids. This chain is Alanine racemase (alr), found in Streptococcus pyogenes serotype M12 (strain MGAS2096).